We begin with the raw amino-acid sequence, 250 residues long: S-adenosyl-L-methionine-dependent 2-deoxy-scyllo-inosamine dehydrogenase (250 aa).

6 residues coordinate [4Fe-4S] cluster: Cys-16, Cys-20, Cys-23, Cys-169, Cys-187, and Glu-223.

Belongs to the radical SAM superfamily. It depends on [4Fe-4S] cluster as a cofactor.

The catalysed reaction is 2-deoxy-scyllo-inosamine + S-adenosyl-L-methionine = 3-amino-2,3-dideoxy-scyllo-inosose + 5'-deoxyadenosine + L-methionine + H(+). The protein operates within antibiotic biosynthesis; butirosin biosynthesis. Its function is as follows. Catalyzes the radical S-adenosyl-L-methionine (SAM)-dependent two-electron oxidation of 2-deoxy-scyllo-inosamine (DOIA) to amino-dideoxy-scyllo-inosose (amino-DOI) in the biosynthetic pathway of butirosin. This chain is S-adenosyl-L-methionine-dependent 2-deoxy-scyllo-inosamine dehydrogenase (btrN), found in Niallia circulans (Bacillus circulans).